Consider the following 124-residue polypeptide: MPTFNQLVRKGRTAPKFKTASPALQSCPQKRGVCTRVYTQTPKKPNSALRKVARVRLTNGIEVTTYIPGIGHNLQEHSIVLIRGGRVKDLPGVRYHVVRGTLDSVGVANRKQGRSKYGAKRPKA.

3-methylthioaspartic acid is present on Asp89.

It belongs to the universal ribosomal protein uS12 family. As to quaternary structure, part of the 30S ribosomal subunit. Contacts proteins S8 and S17. May interact with IF1 in the 30S initiation complex.

Its function is as follows. With S4 and S5 plays an important role in translational accuracy. In terms of biological role, interacts with and stabilizes bases of the 16S rRNA that are involved in tRNA selection in the A site and with the mRNA backbone. Located at the interface of the 30S and 50S subunits, it traverses the body of the 30S subunit contacting proteins on the other side and probably holding the rRNA structure together. The combined cluster of proteins S8, S12 and S17 appears to hold together the shoulder and platform of the 30S subunit. This is Small ribosomal subunit protein uS12 from Koribacter versatilis (strain Ellin345).